A 947-amino-acid chain; its full sequence is Protein translocase subunit SecA 1 (947 aa).

ATP contacts are provided by residues glutamine 83, glycine 101 to threonine 105, and aspartate 490. The interval alanine 860–glycine 947 is disordered. Residues threonine 925 to arginine 934 show a composition bias toward basic and acidic residues. A compositionally biased stretch (basic residues) spans lysine 935–glycine 947.

It belongs to the SecA family. Monomer and homodimer. Part of the essential Sec protein translocation apparatus which comprises SecA, SecYEG and auxiliary proteins SecDF. Other proteins may also be involved.

Its subcellular location is the cell membrane. It is found in the cytoplasm. It carries out the reaction ATP + H2O + cellular proteinSide 1 = ADP + phosphate + cellular proteinSide 2.. Functionally, part of the Sec protein translocase complex. Interacts with the SecYEG preprotein conducting channel. Has a central role in coupling the hydrolysis of ATP to the transfer of proteins into and across the cell membrane, serving as an ATP-driven molecular motor driving the stepwise translocation of polypeptide chains across the membrane. The protein is Protein translocase subunit SecA 1 of Mycobacterium sp. (strain JLS).